The primary structure comprises 236 residues: UPF0502 protein Bxeno_B1639 (236 aa).

The protein belongs to the UPF0502 family.

This Paraburkholderia xenovorans (strain LB400) protein is UPF0502 protein Bxeno_B1639.